The following is a 304-amino-acid chain: N-acetyllactosaminide alpha-2,3-sialyltransferase (304 aa).

CMP-N-acetyl-beta-neuraminate contacts are provided by residues Phe221 to Ala225, Phe242 to Glu243, and Ser262 to Ser263. Catalysis depends on His223, which acts as the Proton donor.

Belongs to the glycosyltransferase 52 family.

The catalysed reaction is a beta-D-galactosyl-(1-&gt;4)-N-acetyl-beta-D-glucosaminyl derivative + CMP-N-acetyl-beta-neuraminate = an N-acetyl-alpha-neuraminyl-(2-&gt;3)-beta-D-galactosyl-(1-&gt;4)-N-acetyl-beta-D-glucosaminyl derivative + CMP + H(+). The protein operates within bacterial outer membrane biogenesis; lipooligosaccharide biosynthesis. Catalyzes the transfer of sialic acid from the substrate CMP-N-acetylneuraminate to the terminal galactose residue of the N-acetyllactosamine moiety of surface lipooligosaccharide (LOS). Thus, functions in the sialylation of LOS, which plays a role in the evasion of the host immune response. This Haemophilus influenzae (strain ATCC 51907 / DSM 11121 / KW20 / Rd) protein is N-acetyllactosaminide alpha-2,3-sialyltransferase.